A 148-amino-acid chain; its full sequence is Nucleoside diphosphate kinase (148 aa).

Positions 9, 57, 85, 91, 102, and 112 each coordinate ATP. T91 carries the post-translational modification Phosphothreonine. The active-site Pros-phosphohistidine intermediate is H115. The residue at position 122 (S122) is a Phosphoserine.

The protein belongs to the NDK family. Homotetramer. Requires Mg(2+) as cofactor.

The protein resides in the cytoplasm. It catalyses the reaction a 2'-deoxyribonucleoside 5'-diphosphate + ATP = a 2'-deoxyribonucleoside 5'-triphosphate + ADP. It carries out the reaction a ribonucleoside 5'-diphosphate + ATP = a ribonucleoside 5'-triphosphate + ADP. Functionally, major role in the synthesis of nucleoside triphosphates other than ATP. The ATP gamma phosphate is transferred to the NDP beta phosphate via a ping-pong mechanism, using a phosphorylated active-site intermediate. The sequence is that of Nucleoside diphosphate kinase from Bacillus cereus (strain ATCC 10987 / NRS 248).